Reading from the N-terminus, the 151-residue chain is Ribosome maturation factor RimP (151 aa).

It belongs to the RimP family.

Its subcellular location is the cytoplasm. Required for maturation of 30S ribosomal subunits. The sequence is that of Ribosome maturation factor RimP from Endomicrobium trichonymphae.